A 591-amino-acid chain; its full sequence is Tricyclene synthase, chloroplastic (591 aa).

Residues 1-45 (MATLLQIGSGVIYSNALRKTLRRPQSSTCIIVTETTPCNKSPTVQ) constitute a chloroplast transit peptide. (2E)-geranyl diphosphate is bound by residues Arg302, Asp339, Asp343, Arg481, and Asn484. Residues Asp339 and Asp343 each coordinate Mg(2+). Positions 339-343 (DDIYD) match the DDXXD motif motif. The Mg(2+) site is built by Asn484, Thr488, and Glu492.

The protein belongs to the terpene synthase family. Tpsb subfamily. Mg(2+) is required as a cofactor. Mn(2+) serves as cofactor. Predominantly expressed in flowers but also in leaves, siliques and in stems.

The protein localises to the plastid. Its subcellular location is the chloroplast stroma. The catalysed reaction is (2E)-geranyl diphosphate = beta-myrcene + diphosphate. It catalyses the reaction (2E)-geranyl diphosphate = tricyclene + diphosphate. It carries out the reaction (2E)-geranyl diphosphate = (E)-beta-ocimene + diphosphate. Its pathway is secondary metabolite biosynthesis; terpenoid biosynthesis. Involved in monoterpene (C10) biosynthesis. The major product is beta-myrcene (56%) followed by (E)-beta-ocimene (20%) and minor amounts (less than 5%) of the cyclic monoterpene (-)-limonene, (+)-limonene, 2-carene and tricyclene. The protein is Tricyclene synthase, chloroplastic of Arabidopsis thaliana (Mouse-ear cress).